Consider the following 446-residue polypeptide: Glycine--tRNA ligase (446 aa).

Residues Arg100 and Glu158 each coordinate substrate. ATP contacts are provided by residues 190 to 192 (RNE), 200 to 205 (FRTREF), 275 to 276 (EL), and 319 to 322 (GIER). 205 to 209 (FEQFE) is a substrate binding site. 315–319 (EPAVG) is a binding site for substrate.

Belongs to the class-II aminoacyl-tRNA synthetase family. Homodimer.

Its subcellular location is the cytoplasm. The enzyme catalyses tRNA(Gly) + glycine + ATP = glycyl-tRNA(Gly) + AMP + diphosphate. Catalyzes the attachment of glycine to tRNA(Gly). This chain is Glycine--tRNA ligase, found in Mycoplasma genitalium (strain ATCC 33530 / DSM 19775 / NCTC 10195 / G37) (Mycoplasmoides genitalium).